The sequence spans 108 residues: Protein FATTY ACID EXPORT 7 (108 aa).

Helical transmembrane passes span 32–52, 55–75, and 85–105; these read ISLV…TELP, PVLA…MMGS, and PAGL…HGLI.

The protein belongs to the TMEM14 family.

The protein resides in the membrane. May be involved in free fatty acids export. The polypeptide is Protein FATTY ACID EXPORT 7 (Arabidopsis thaliana (Mouse-ear cress)).